Consider the following 169-residue polypeptide: Ribosome maturation factor RimM (169 aa).

A PRC barrel domain is found at 96 to 169 (DGEYYWADLI…RILVDWGLDY (74 aa)).

Belongs to the RimM family. In terms of assembly, binds ribosomal protein uS19.

The protein resides in the cytoplasm. An accessory protein needed during the final step in the assembly of 30S ribosomal subunit, possibly for assembly of the head region. Essential for efficient processing of 16S rRNA. May be needed both before and after RbfA during the maturation of 16S rRNA. It has affinity for free ribosomal 30S subunits but not for 70S ribosomes. This Chromobacterium violaceum (strain ATCC 12472 / DSM 30191 / JCM 1249 / CCUG 213 / NBRC 12614 / NCIMB 9131 / NCTC 9757 / MK) protein is Ribosome maturation factor RimM.